Reading from the N-terminus, the 525-residue chain is MAGRNIKNGENNKIAGSSLHLEKNPTTPPEAEATLKKLGLVASVAAGVQFGWALQLSLLTPYVQLLGIPHTWAAYIWLCGPISGMIVQPLVGYYSDRCTSRFGRRRPFIAAGAALVAVAVGLIGFAADIGAASGDPTGNVAKPRAIAVFVVGFWILDVANNTLQGPCRALLADMAAGSQTKTRYANAFFSFFMALGNIGGYAAGSYSRLYTVFPFTKTAACDVYCANLKSCFFISITLLIVLTILALSVVKERQITIDEIQEEEDLKNRNNSSGCARLPFFGQLIGALKDLPKPMLILLLVTALNWIAWFPFLLFDTDWMGKEVYGGTVGEGKLYDQGVHAGALGLMINSVVLGVMSLSIEGLARMVGGAKRLWGIVNIILAVCLAMTVLVTKSAEHFRDSHHIMGSAVPPPPPAGVKGGALAIFAVLGIPLAITFSIPFALASIFSASSGSGQGLSLGVLNLAIVVPQMFVSVTSGPWDAMFGGGNLPAFVVGAVAATASAVLSFTLLPSPPPEAKIGGSMGGH.

Residues 1 to 37 lie on the Cytoplasmic side of the membrane; the sequence is MAGRNIKNGENNKIAGSSLHLEKNPTTPPEAEATLKK. 12 helical membrane passes run 38–58, 72–92, 107–127, 145–165, 184–204, 230–250, 295–315, 338–358, 373–393, 422–442, 455–475, and 488–508; these read LGLV…QLSL, WAAY…PLVG, PFIA…GFAA, AIAV…TLQG, YANA…YAAG, SCFF…LSVV, MLIL…FLLF, GVHA…VMSL, LWGI…LVTK, LAIF…PFAL, GLSL…VSVT, and LPAF…SFTL. The Cytoplasmic portion of the chain corresponds to 509–525; sequence LPSPPPEAKIGGSMGGH.

This sequence belongs to the glycoside-pentoside-hexuronide (GPH) cation symporter transporter (TC 2.A.2.4) family.

Its subcellular location is the membrane. It participates in glycan biosynthesis; sucrose metabolism. Functionally, responsible for the transport of sucrose into the cell, with the concomitant uptake of protons (symport system). Can also transport maltose at a lesser rate. This Spinacia oleracea (Spinach) protein is Sucrose transport protein.